We begin with the raw amino-acid sequence, 842 residues long: Elongation factor 2 (842 aa).

The tr-type G domain maps to 17–253; the sequence is TNVRNMSVIA…LWGDSYFNPK (237 aa). GTP is bound by residues 26 to 33, 158 to 161, and 213 to 215; these read AHVDHGKS, NKVD, and SGL. A Diphthamide modification is found at His-699.

This sequence belongs to the TRAFAC class translation factor GTPase superfamily. Classic translation factor GTPase family. EF-G/EF-2 subfamily.

It localises to the cytoplasm. The enzyme catalyses GTP + H2O = GDP + phosphate + H(+). Catalyzes the GTP-dependent ribosomal translocation step during translation elongation. During this step, the ribosome changes from the pre-translocational (PRE) to the post-translocational (POST) state as the newly formed A-site-bound peptidyl-tRNA and P-site-bound deacylated tRNA move to the P and E sites, respectively. Catalyzes the coordinated movement of the two tRNA molecules, the mRNA and conformational changes in the ribosome. This Eremothecium gossypii (strain ATCC 10895 / CBS 109.51 / FGSC 9923 / NRRL Y-1056) (Yeast) protein is Elongation factor 2 (EFT1).